We begin with the raw amino-acid sequence, 227 residues long: MLLILADLLSPQELQTARQLLRNARWDDGKDSAGTQARQAKNNQQLPRDSEAGRRIAAMVLAALERSALFLTATLPKRVFPPRVNRYGGEHNHYGDHVDSAVRQLADRHDRLRTDISCTVFLSPPDEYDGGELCIDDTFGPQRVKLPAGHAVIYPGTSVHQVRPVTRGYRMACFFWVESLVRSAEQRRLLYDMDMALLRLRQQHGESPETVALTGSYHNLLRMWADT.

A disordered region spans residues 27 to 51; sequence DDGKDSAGTQARQAKNNQQLPRDSE. The span at 33 to 47 shows a compositional bias: polar residues; that stretch reads AGTQARQAKNNQQLP. The 102-residue stretch at 78-179 folds into the Fe2OG dioxygenase domain; sequence RVFPPRVNRY…RMACFFWVES (102 aa). Fe cation contacts are provided by histidine 97, aspartate 99, and histidine 160. Arginine 170 serves as a coordination point for 2-oxoglutarate.

Requires Fe(2+) as cofactor. L-ascorbate serves as cofactor.

This is PKHD-type hydroxylase Veis_3084 from Verminephrobacter eiseniae (strain EF01-2).